The chain runs to 120 residues: NAD(P)H-quinone oxidoreductase subunit 3 (120 aa).

Helical transmembrane passes span 6–26 (GYDA…LALV), 64–84 (MFAL…PWAV), and 89–109 (LGLL…VALA).

This sequence belongs to the complex I subunit 3 family. In terms of assembly, NDH-1 can be composed of about 15 different subunits; different subcomplexes with different compositions have been identified which probably have different functions.

The protein localises to the cellular thylakoid membrane. The catalysed reaction is a plastoquinone + NADH + (n+1) H(+)(in) = a plastoquinol + NAD(+) + n H(+)(out). The enzyme catalyses a plastoquinone + NADPH + (n+1) H(+)(in) = a plastoquinol + NADP(+) + n H(+)(out). Its function is as follows. NDH-1 shuttles electrons from an unknown electron donor, via FMN and iron-sulfur (Fe-S) centers, to quinones in the respiratory and/or the photosynthetic chain. The immediate electron acceptor for the enzyme in this species is believed to be plastoquinone. Couples the redox reaction to proton translocation, and thus conserves the redox energy in a proton gradient. Cyanobacterial NDH-1 also plays a role in inorganic carbon-concentration. The protein is NAD(P)H-quinone oxidoreductase subunit 3 of Prochlorococcus marinus (strain MIT 9211).